We begin with the raw amino-acid sequence, 477 residues long: C3a anaphylatoxin chemotactic receptor (477 aa).

Topologically, residues Met-1 to Asp-23 are extracellular. The N-linked (GlcNAc...) asparagine glycan is linked to Asn-9. Residues Ile-24 to Trp-46 traverse the membrane as a helical segment. The Cytoplasmic segment spans residues Val-47–Asn-57. A helical membrane pass occupies residues Thr-58–Ala-80. Over His-81–Lys-96 the chain is Extracellular. A disulfide bond links Cys-95 and Cys-172. A helical transmembrane segment spans residues Leu-97–Leu-118. The Cytoplasmic portion of the chain corresponds to Asp-119 to Ala-139. A helical membrane pass occupies residues Phe-140–Tyr-160. Residues Arg-161–Arg-333 are Extracellular-facing. A glycan (N-linked (GlcNAc...) asparagine) is linked at Asn-168. 2 positions are modified to sulfotyrosine: Tyr-174 and Tyr-184. Residues Asn-197 and Asn-201 are each glycosylated (N-linked (GlcNAc...) asparagine). Tyr-312 carries the post-translational modification Sulfotyrosine. A helical transmembrane segment spans residues Leu-334–Val-353. The Cytoplasmic portion of the chain corresponds to Phe-354–Arg-370. Residues Val-371–Leu-393 form a helical membrane-spanning segment. Residues Leu-394–Asp-410 lie on the Extracellular side of the membrane. Residues His-411–Leu-431 traverse the membrane as a helical segment. Residues Gly-432–Val-477 are Cytoplasmic-facing. Ser-452 bears the Phosphoserine mark. A Phosphothreonine modification is found at Thr-456.

The protein belongs to the G-protein coupled receptor 1 family. As to quaternary structure, interacts with VGF-derived peptide TLQP-21. Detected in varying levels in all tissues examined except the spleen. Especially abundant in heart and lung.

It is found in the cell membrane. Receptor for the chemotactic and inflammatory peptide anaphylatoxin C3a. This receptor stimulates chemotaxis, granule enzyme release and superoxide anion production. The polypeptide is C3a anaphylatoxin chemotactic receptor (C3ar1) (Mus musculus (Mouse)).